We begin with the raw amino-acid sequence, 488 residues long: MMFLFENSINMIKYSIYLVPLIIMILLSISIKEDSNRMMLLFKSLKLTIILILVLLTIEEAIYVKLNGHLIKTELITFVEYILLVVSYLIISMFEEGVKEGRKTKITEEALILMYSSLIGMLISMEAHNLITLFLSLEITSICFYILALNKNSRKVSIEGGLKYYIIGGIASTIILLGIVSIYKNTGSLMYTDILVIGMERIGNYQVQMGIALIVLGLIIKLGVAPFHGWLIDTYEGTGMLMTFYLTITQKIVTIIVLINLYKNLITYLNIEVINKGLLVLILVTLIVGTVGSLRQQKVIRFIAYSAIVNSALLILFFVGNNTEELIIYSIYYLINYIIGLAVLINIIIGVVKTKNGGNIEILSELKNIWLNNKVIGISLIIVLIYLAGLPPFTNFISKIILILPLIVEGKIYITMIIFFLTVGIMIYYMNVVKIIIIDKKQEVGVETYKMTKGGSITNIVGGIIWIIISQIYLDEIISIIKIIVAIN.

14 helical membrane passes run 11–31, 38–58, 74–94, 106–126, 129–149, 162–182, 211–231, 239–259, 271–291, 299–319, 331–351, 376–396, 412–434, and 460–480; these read MIKYSIYLVPLIIMILLSISI, MMLLFKSLKLTIILILVLLTI, ELITFVEYILLVVSYLIISMF, ITEEALILMYSSLIGMLISME, NLITLFLSLEITSICFYILAL, LKYYIIGGIASTIILLGIVSI, IALIVLGLIIKLGVAPFHGWL, GMLMTFYLTITQKIVTIIVLI, IEVINKGLLVLILVTLIVGTV, VIRFIAYSAIVNSALLILFFV, IYYLINYIIGLAVLINIIIGV, IGISLIIVLIYLAGLPPFTNF, IYITMIIFFLTVGIMIYYMNVVK, and IVGGIIWIIISQIYLDEIISI.

It belongs to the complex I subunit 2 family.

It localises to the mitochondrion inner membrane. It catalyses the reaction a ubiquinone + NADH + 5 H(+)(in) = a ubiquinol + NAD(+) + 4 H(+)(out). Core subunit of the mitochondrial membrane respiratory chain NADH dehydrogenase (Complex I) that is believed to belong to the minimal assembly required for catalysis. Complex I functions in the transfer of electrons from NADH to the respiratory chain. The immediate electron acceptor for the enzyme is believed to be ubiquinone. This Dictyostelium discoideum (Social amoeba) protein is NADH-ubiquinone oxidoreductase chain 2 (nad2).